The primary structure comprises 527 residues: ATP synthase subunit alpha (527 aa).

172 to 179 (GDRQTGKT) contacts ATP.

The protein belongs to the ATPase alpha/beta chains family. In terms of assembly, F-type ATPases have 2 components, CF(1) - the catalytic core - and CF(0) - the membrane proton channel. CF(1) has five subunits: alpha(3), beta(3), gamma(1), delta(1), epsilon(1). CF(0) has three main subunits: a(1), b(2) and c(9-12). The alpha and beta chains form an alternating ring which encloses part of the gamma chain. CF(1) is attached to CF(0) by a central stalk formed by the gamma and epsilon chains, while a peripheral stalk is formed by the delta and b chains.

The protein localises to the cell inner membrane. It carries out the reaction ATP + H2O + 4 H(+)(in) = ADP + phosphate + 5 H(+)(out). Produces ATP from ADP in the presence of a proton gradient across the membrane. The alpha chain is a regulatory subunit. In Bacteroides thetaiotaomicron (strain ATCC 29148 / DSM 2079 / JCM 5827 / CCUG 10774 / NCTC 10582 / VPI-5482 / E50), this protein is ATP synthase subunit alpha.